An 863-amino-acid polypeptide reads, in one-letter code: Oleate activated transcription factor 3 (863 aa).

The segment at residues valine 18–cysteine 47 is a DNA-binding region (zn(2)-C6 fungal-type). The span at aspartate 52 to leucine 63 shows a compositional bias: polar residues. The interval aspartate 52–tryptophan 99 is disordered.

This sequence belongs to the OAF3 family.

Its subcellular location is the cytoplasm. The protein localises to the nucleus. It is found in the mitochondrion. Transcriptional inhibitor with a significantly increased number of target genes in response to oleate. This is Oleate activated transcription factor 3 (OAF3) from Saccharomyces cerevisiae (strain ATCC 204508 / S288c) (Baker's yeast).